Consider the following 417-residue polypeptide: 4-hydroxy-3-methylbut-2-en-1-yl diphosphate synthase (flavodoxin) (417 aa).

4 residues coordinate [4Fe-4S] cluster: Cys304, Cys307, Cys350, and Glu357.

Belongs to the IspG family. It depends on [4Fe-4S] cluster as a cofactor.

It catalyses the reaction (2E)-4-hydroxy-3-methylbut-2-enyl diphosphate + oxidized [flavodoxin] + H2O + 2 H(+) = 2-C-methyl-D-erythritol 2,4-cyclic diphosphate + reduced [flavodoxin]. Its pathway is isoprenoid biosynthesis; isopentenyl diphosphate biosynthesis via DXP pathway; isopentenyl diphosphate from 1-deoxy-D-xylulose 5-phosphate: step 5/6. Its function is as follows. Converts 2C-methyl-D-erythritol 2,4-cyclodiphosphate (ME-2,4cPP) into 1-hydroxy-2-methyl-2-(E)-butenyl 4-diphosphate. This chain is 4-hydroxy-3-methylbut-2-en-1-yl diphosphate synthase (flavodoxin), found in Sinorhizobium medicae (strain WSM419) (Ensifer medicae).